Here is a 125-residue protein sequence, read N- to C-terminus: Urotensin-2 (125 aa).

A signal peptide spans 1–20 (MYKLASCCLLFIGFLNPLFS). A propeptide spanning residues 21 to 111 (LPLLDSGEVS…HLLARIRKPY (91 aa)) is cleaved from the precursor. Residues C119 and C124 are joined by a disulfide bond.

The protein belongs to the urotensin-2 family.

It localises to the secreted. Functionally, highly potent vasoconstrictor. The protein is Urotensin-2 (UTS2) of Macaca mulatta (Rhesus macaque).